A 218-amino-acid chain; its full sequence is Ras-related protein Rab-4A (218 aa).

G23, T24, G25, K26, S27, and C28 together coordinate GDP. GTP is bound by residues G23, T24, G25, K26, S27, C28, S42, H44, and T45. S27 lines the Mg(2+) pocket. Positions 44–49 (HTIGVE) match the Switch 1 motif. Mg(2+)-binding residues include T45 and D68. Residues 70–79 (AGQERFRSVT) carry the Switch 2 motif. G71 contacts GTP. The residue at position 72 (Q72) is a 5-glutamyl serotonin. 5 residues coordinate GDP: N126, K127, D129, A157, and L158. The GTP site is built by N126, K127, D129, A157, and L158. Position 190 is a phosphoserine (S190). The residue at position 204 (S204) is a Phosphoserine; by CDK1. S-geranylgeranyl cysteine attachment occurs at residues C216 and C218. At C218 the chain carries Cysteine methyl ester.

This sequence belongs to the small GTPase superfamily. Rab family. In terms of assembly, interacts with SGSM1, SGSM2 and SGSM3. Interacts with RAB11FIP1, RABEP1, ZFYVE20 and RUFY1. Interacts (membrane-bound form) with NDRG1; the interaction involves NDRG1 in vesicular recycling of E-cadherin. Interacts (in GTP-bound form) with GRIPAP1 (via N-terminus). Interacts with RABEP1 and RBSN. Does not interact with HPS4. Interacts with RABEP2; this interaction may mediate VEGFR2 cell surface expression. It depends on Mg(2+) as a cofactor. Post-translationally, phosphorylated by CDK1 kinase during mitosis. In terms of processing, serotonylation of Gln-72 by TGM2 during activation and aggregation of platelets leads to constitutive activation of GTPase activity.

Its subcellular location is the membrane. It is found in the cytoplasm. The protein localises to the early endosome membrane. It localises to the recycling endosome membrane. It carries out the reaction GTP + H2O = GDP + phosphate + H(+). Its activity is regulated as follows. Regulated by guanine nucleotide exchange factors (GEFs) which promote the exchange of bound GDP for free GTP. Regulated by GTPase activating proteins (GAPs) which increase the GTP hydrolysis activity. Inhibited by GDP dissociation inhibitors (GDIs). The small GTPases Rab are key regulators of intracellular membrane trafficking, from the formation of transport vesicles to their fusion with membranes. Rabs cycle between an inactive GDP-bound form and an active GTP-bound form that is able to recruit to membranes different sets of downstream effectors directly responsible for vesicle formation, movement, tethering and fusion. RAB4A is involved in protein transport. Also plays a role in vesicular traffic. Mediates VEGFR2 endosomal trafficking to enhance VEGFR2 signaling. Acts as a regulator of platelet alpha-granule release during activation and aggregation of platelets. This chain is Ras-related protein Rab-4A, found in Homo sapiens (Human).